Here is a 183-residue protein sequence, read N- to C-terminus: Ribosome rescue factor SmrB (183 aa).

Residues 98-173 (LDLHGLTQLQ…GDAALLVLIE (76 aa)) form the Smr domain.

The protein belongs to the SmrB family. In terms of assembly, associates with collided ribosomes, but not with correctly translating polysomes.

Its function is as follows. Acts as a ribosome collision sensor. Detects stalled/collided disomes (pairs of ribosomes where the leading ribosome is stalled and a second ribosome has collided with it) and endonucleolytically cleaves mRNA at the 5' boundary of the stalled ribosome. Stalled/collided disomes form a new interface (primarily via the 30S subunits) that binds SmrB. Cleaved mRNA becomes available for tmRNA ligation, leading to ribosomal subunit dissociation and rescue of stalled ribosomes. In Salmonella arizonae (strain ATCC BAA-731 / CDC346-86 / RSK2980), this protein is Ribosome rescue factor SmrB.